The chain runs to 515 residues: MDEFHRNGKEDSSWQQCFLYPLFFQEDLYAIYHDHYLDGSSSSEPMEHVSSNDQFSFLTVKRLIGQIRQQNHSIFLFVNRDPNPLVDRNKSSYSESVLEGLTLVLEVPFSIRSKNSVEGINEWKSFRSIHSIFPFLEDKFPHSNYISDTRIPYSIHPEILVRTFRRWIRDAPSLHLLRSVLYEYRNSSENLQRSLIVAPRVNTRFFLFLWNHYVYECESILVPLLKRSSHSRSLSHGSFPERTHFNRKIKHILIFSRRNSLKRIWSLKDPNIHYVRYGERSIIAIKGTHLLVKKCRYHLLIFRQCYFHLWFEPYRVCSHQLSKNCSSSLGYFLRIRMKPLLVRTKMLDELFIADLITGEFDPIVPIIPIIGLLAREKFCDISGRPISKLSWTSLTDDDILDRFDRIWRNIFHYYSGSFGRDGLYRIKYILSLSCAKTLACKHKSTIRVVRKELGPELFKKSFSKEREFDSPPFSSKSGARSQRERIWHSDIPQINPLANSWQKIQDLKVENLFDQ.

It belongs to the intron maturase 2 family. MatK subfamily.

The protein localises to the plastid. The protein resides in the chloroplast. Functionally, usually encoded in the trnK tRNA gene intron. Probably assists in splicing its own and other chloroplast group II introns. The protein is Maturase K of Pseudotsuga menziesii (Douglas-fir).